The following is a 130-amino-acid chain: MVQDRFYATGKRKNAIARVWLTPGTGKVIVNKMATTEYFGKIFKEHLIEKPFKTTDTFEKYDVIATLKGGGKSAQVDALAHGISRALLETDPENRTPLKQAGLLRRDQRVKERKKYGQKGARAKFQFSKR.

The tract at residues 109–130 is disordered; the sequence is RVKERKKYGQKGARAKFQFSKR.

It belongs to the universal ribosomal protein uS9 family.

This is Small ribosomal subunit protein uS9 from Desulfotalea psychrophila (strain LSv54 / DSM 12343).